We begin with the raw amino-acid sequence, 210 residues long: 7-methyl-GTP pyrophosphatase (210 aa).

Asp-79 serves as the catalytic Proton acceptor.

It belongs to the Maf family. YceF subfamily. A divalent metal cation is required as a cofactor.

It localises to the cytoplasm. The enzyme catalyses N(7)-methyl-GTP + H2O = N(7)-methyl-GMP + diphosphate + H(+). Functionally, nucleoside triphosphate pyrophosphatase that hydrolyzes 7-methyl-GTP (m(7)GTP). May have a dual role in cell division arrest and in preventing the incorporation of modified nucleotides into cellular nucleic acids. The sequence is that of 7-methyl-GTP pyrophosphatase from Burkholderia orbicola (strain AU 1054).